The primary structure comprises 91 residues: Small ribosomal subunit protein uS19 (91 aa).

It belongs to the universal ribosomal protein uS19 family.

Protein S19 forms a complex with S13 that binds strongly to the 16S ribosomal RNA. The polypeptide is Small ribosomal subunit protein uS19 (Pseudomonas paraeruginosa (strain DSM 24068 / PA7) (Pseudomonas aeruginosa (strain PA7))).